A 250-amino-acid polypeptide reads, in one-letter code: DNA repair protein RecO (250 aa).

Belongs to the RecO family.

Involved in DNA repair and RecF pathway recombination. This Thermodesulfovibrio yellowstonii (strain ATCC 51303 / DSM 11347 / YP87) protein is DNA repair protein RecO.